A 339-amino-acid chain; its full sequence is UPF0324 membrane protein CPE0129 (339 aa).

The next 8 membrane-spanning stretches (helical) occupy residues 12 to 30 (ILPGLFICLIIGIIAEFLG), 35 to 54 (TIGAATFAIFMGIFLGNTLF), 90 to 112 (LGFNGVFYIAILMTLTICTTYFI), 122 to 144 (YSLLMSAGNAVCGSSAIGSVSPV), 156 to 178 (ITIVNVTGTILMILLPLITSILY), 210 to 232 (VVELATVFKIIRIIFLVVVVLVF), 259 to 281 (WFIIGFFIICILNSIGIIPGILG), and 316 to 338 (MLYGGLVGVCQIIFALSLINIFI).

The protein belongs to the UPF0324 family.

It localises to the cell membrane. The polypeptide is UPF0324 membrane protein CPE0129 (Clostridium perfringens (strain 13 / Type A)).